The primary structure comprises 175 residues: Large ribosomal subunit protein uL10 (175 aa).

This sequence belongs to the universal ribosomal protein uL10 family. In terms of assembly, part of the ribosomal stalk of the 50S ribosomal subunit. The N-terminus interacts with L11 and the large rRNA to form the base of the stalk. The C-terminus forms an elongated spine to which L12 dimers bind in a sequential fashion forming a multimeric L10(L12)X complex.

In terms of biological role, forms part of the ribosomal stalk, playing a central role in the interaction of the ribosome with GTP-bound translation factors. In Thermobifida fusca (strain YX), this protein is Large ribosomal subunit protein uL10.